Here is a 1185-residue protein sequence, read N- to C-terminus: Liprin-alpha-4 (1185 aa).

2 coiled-coil regions span residues 24 to 123 (ANFE…CLVS) and 165 to 499 (DEKV…GRGG). 2 disordered regions span residues 638–709 (SASP…RTLR) and 721–757 (EEGK…KSSI). Residue Ser-640 is modified to Phosphoserine. Residues 645–656 (GRSTPKLTSRSA) show a composition bias toward polar residues. The residue at position 681 (Ser-681) is a Phosphoserine. The span at 684–695 (SREENREDKATI) shows a compositional bias: basic and acidic residues. Over residues 729–742 (DQGSNPSSSNSSQD) the composition is skewed to low complexity. SAM domains lie at 829-895 (WDGP…MVSL), 944-1008 (NHEW…LKRL), and 1032-1101 (WTND…LLAL).

Belongs to the liprin family. Liprin-alpha subfamily. In terms of assembly, forms homodimers and heterodimers with liprins-alpha and liprins-beta. Interacts with the second PTPase domain of PTPRD, PTPRF and PTPRS. Interacts with RIMS1 and RIMS2. Interacts with GIT1 and GIT2. Interacts with GRIP1. Interacts with KIF1A. As to expression, expressed only in the heart, brain, and skeletal muscle.

Its subcellular location is the cytoplasm. The protein localises to the cell surface. In terms of biological role, may regulate the disassembly of focal adhesions. May localize receptor-like tyrosine phosphatases type 2A at specific sites on the plasma membrane, possibly regulating their interaction with the extracellular environment and their association with substrates. This is Liprin-alpha-4 (PPFIA4) from Homo sapiens (Human).